Reading from the N-terminus, the 378-residue chain is UPF0284 protein MK0224 (378 aa).

It belongs to the UPF0284 family.

The chain is UPF0284 protein MK0224 from Methanopyrus kandleri (strain AV19 / DSM 6324 / JCM 9639 / NBRC 100938).